We begin with the raw amino-acid sequence, 195 residues long: N-(5'-phosphoribosyl)anthranilate isomerase (195 aa).

This sequence belongs to the TrpF family.

The catalysed reaction is N-(5-phospho-beta-D-ribosyl)anthranilate = 1-(2-carboxyphenylamino)-1-deoxy-D-ribulose 5-phosphate. Its pathway is amino-acid biosynthesis; L-tryptophan biosynthesis; L-tryptophan from chorismate: step 3/5. The sequence is that of N-(5'-phosphoribosyl)anthranilate isomerase from Methanoregula boonei (strain DSM 21154 / JCM 14090 / 6A8).